The chain runs to 198 residues: dITP/XTP pyrophosphatase (198 aa).

Position 8–13 (8–13 (TKNKGK)) interacts with substrate. Aspartate 69 functions as the Proton acceptor in the catalytic mechanism. Aspartate 69 contacts Mg(2+). Substrate contacts are provided by residues serine 70, 152–155 (FGYD), lysine 175, and 180–181 (HR).

The protein belongs to the HAM1 NTPase family. In terms of assembly, homodimer. The cofactor is Mg(2+).

The enzyme catalyses XTP + H2O = XMP + diphosphate + H(+). It catalyses the reaction dITP + H2O = dIMP + diphosphate + H(+). The catalysed reaction is ITP + H2O = IMP + diphosphate + H(+). In terms of biological role, pyrophosphatase that catalyzes the hydrolysis of nucleoside triphosphates to their monophosphate derivatives, with a high preference for the non-canonical purine nucleotides XTP (xanthosine triphosphate), dITP (deoxyinosine triphosphate) and ITP. Seems to function as a house-cleaning enzyme that removes non-canonical purine nucleotides from the nucleotide pool, thus preventing their incorporation into DNA/RNA and avoiding chromosomal lesions. This is dITP/XTP pyrophosphatase from Shouchella clausii (strain KSM-K16) (Alkalihalobacillus clausii).